Consider the following 315-residue polypeptide: Tubulin beta-1 chain (315 aa).

GTP contacts are provided by Ser-6, Gly-10, Thr-11, Gly-12, Asn-72, and Asn-94. The segment at 295-315 (DATADEEEYYEDEEEEEAQGM) is disordered. Residues 297-315 (TADEEEYYEDEEEEEAQGM) show a composition bias toward acidic residues.

It belongs to the tubulin family. In terms of assembly, dimer of alpha and beta chains. A typical microtubule is a hollow water-filled tube with an outer diameter of 25 nm and an inner diameter of 15 nM. Alpha-beta heterodimers associate head-to-tail to form protofilaments running lengthwise along the microtubule wall with the beta-tubulin subunit facing the microtubule plus end conferring a structural polarity. Microtubules usually have 13 protofilaments but different protofilament numbers can be found in some organisms and specialized cells. Requires Mg(2+) as cofactor.

Its subcellular location is the cytoplasm. It is found in the cytoskeleton. Functionally, tubulin is the major constituent of microtubules, a cylinder consisting of laterally associated linear protofilaments composed of alpha- and beta-tubulin heterodimers. Microtubules grow by the addition of GTP-tubulin dimers to the microtubule end, where a stabilizing cap forms. Below the cap, tubulin dimers are in GDP-bound state, owing to GTPase activity of alpha-tubulin. This Daucus carota (Wild carrot) protein is Tubulin beta-1 chain (TUBB1).